Reading from the N-terminus, the 461-residue chain is tRNA-splicing endonuclease subunit Sen2 (461 aa).

Disordered stretches follow at residues 140 to 176 (GAEQ…TSSP) and 190 to 210 (GDPA…DVKE). The span at 144-176 (TGDSCDTVCPNTENTELSGQSSTDTGNIATSSP) shows a compositional bias: polar residues. A compositionally biased stretch (basic and acidic residues) spans 201–210 (KEQEPADVKE). Active-site residues include tyrosine 365, histidine 373, and lysine 412.

It belongs to the tRNA-intron endonuclease family. In terms of assembly, tRNA splicing endonuclease is a heterotetramer composed of SEN2, SEN15, SEN34/LENG5 and SEN54.

It is found in the nucleus. It catalyses the reaction pretRNA = a 3'-half-tRNA molecule with a 5'-OH end + a 5'-half-tRNA molecule with a 2',3'-cyclic phosphate end + an intron with a 2',3'-cyclic phosphate and a 5'-hydroxyl terminus.. Functionally, constitutes one of the two catalytic subunit of the tRNA-splicing endonuclease complex, a complex responsible for identification and cleavage of the splice sites in pre-tRNA. It cleaves pre-tRNA at the 5'- and 3'-splice sites to release the intron. The products are an intron and two tRNA half-molecules bearing 2',3'-cyclic phosphate and 5'-OH termini. There are no conserved sequences at the splice sites, but the intron is invariably located at the same site in the gene, placing the splice sites an invariant distance from the constant structural features of the tRNA body. Probably carries the active site for 5'-splice site cleavage. The tRNA splicing endonuclease is also involved in mRNA processing via its association with pre-mRNA 3'-end processing factors, establishing a link between pre-tRNA splicing and pre-mRNA 3'-end formation, suggesting that the endonuclease subunits function in multiple RNA-processing events. This chain is tRNA-splicing endonuclease subunit Sen2 (TSEN2), found in Gallus gallus (Chicken).